Here is a 281-residue protein sequence, read N- to C-terminus: Bifunctional protein FolD (281 aa).

NADP(+) contacts are provided by residues 165-167 (GRG), Thr-192, and Val-233.

The protein belongs to the tetrahydrofolate dehydrogenase/cyclohydrolase family. In terms of assembly, homodimer.

It carries out the reaction (6R)-5,10-methylene-5,6,7,8-tetrahydrofolate + NADP(+) = (6R)-5,10-methenyltetrahydrofolate + NADPH. The enzyme catalyses (6R)-5,10-methenyltetrahydrofolate + H2O = (6R)-10-formyltetrahydrofolate + H(+). Its pathway is one-carbon metabolism; tetrahydrofolate interconversion. Functionally, catalyzes the oxidation of 5,10-methylenetetrahydrofolate to 5,10-methenyltetrahydrofolate and then the hydrolysis of 5,10-methenyltetrahydrofolate to 10-formyltetrahydrofolate. The protein is Bifunctional protein FolD of Corynebacterium diphtheriae (strain ATCC 700971 / NCTC 13129 / Biotype gravis).